We begin with the raw amino-acid sequence, 113 residues long: UPF0102 protein Mfla_2283 (113 aa).

The protein belongs to the UPF0102 family.

This is UPF0102 protein Mfla_2283 from Methylobacillus flagellatus (strain ATCC 51484 / DSM 6875 / VKM B-1610 / KT).